Reading from the N-terminus, the 179-residue chain is Large ribosomal subunit protein uL6c (179 aa).

This sequence belongs to the universal ribosomal protein uL6 family. As to quaternary structure, part of the 50S ribosomal subunit.

The protein resides in the plastid. Its subcellular location is the chloroplast. Its function is as follows. Binds 23S rRNA. In Trieres chinensis (Marine centric diatom), this protein is Large ribosomal subunit protein uL6c (rpl6).